The chain runs to 65 residues: MPKIKTNRAAAKRFKKTGSGKYKFRKANASHILTKKTTKRKRSLRLDQIIGASDLKEVKRLLPNG.

Belongs to the bacterial ribosomal protein bL35 family.

The polypeptide is Large ribosomal subunit protein bL35 (Desulforapulum autotrophicum (strain ATCC 43914 / DSM 3382 / VKM B-1955 / HRM2) (Desulfobacterium autotrophicum)).